Consider the following 72-residue polypeptide: Small proline-rich protein 2E (72 aa).

The segment covering Met1 to Pro11 has biased composition (low complexity). Residues Met1–Thr20 form a disordered region. A run of 3 repeats spans residues Pro21 to Pro29, Pro30 to Pro38, and Pro39 to Pro47. Residues Pro21–Pro47 form a 3 X 9 AA tandem repeats of P-K-C-P-[EQ]-P-C-P-P region. The disordered stretch occupies residues Pro42 to Lys72. Positions Pro56–Lys72 are enriched in pro residues.

It belongs to the cornifin (SPRR) family.

Its subcellular location is the cytoplasm. Cross-linked envelope protein of keratinocytes. It is a keratinocyte protein that first appears in the cell cytosol, but ultimately becomes cross-linked to membrane proteins by transglutaminase. All that results in the formation of an insoluble envelope beneath the plasma membrane. This Homo sapiens (Human) protein is Small proline-rich protein 2E (SPRR2E).